The sequence spans 470 residues: tRNA modification GTPase MnmE (470 aa).

The (6S)-5-formyl-5,6,7,8-tetrahydrofolate site is built by R24, E81, and K122. The TrmE-type G domain occupies 218–383 (GIKIVIAGKP…LQEYLSNNIK (166 aa)). N228 contributes to the K(+) binding site. GTP-binding positions include 228–233 (NAGKSS), 247–253 (STISGTT), and 272–275 (DTAG). S232 contributes to the Mg(2+) binding site. Residues S247, I249, and T252 each contribute to the K(+) site. A Mg(2+)-binding site is contributed by T253. Residue K470 participates in (6S)-5-formyl-5,6,7,8-tetrahydrofolate binding.

The protein belongs to the TRAFAC class TrmE-Era-EngA-EngB-Septin-like GTPase superfamily. TrmE GTPase family. As to quaternary structure, homodimer. Heterotetramer of two MnmE and two MnmG subunits. The cofactor is K(+).

The protein localises to the cytoplasm. Functionally, exhibits a very high intrinsic GTPase hydrolysis rate. Involved in the addition of a carboxymethylaminomethyl (cmnm) group at the wobble position (U34) of certain tRNAs, forming tRNA-cmnm(5)s(2)U34. The sequence is that of tRNA modification GTPase MnmE from Blochmanniella pennsylvanica (strain BPEN).